The following is a 1374-amino-acid chain: DNA-directed RNA polymerase subunit beta' (1374 aa).

Residues cysteine 71, cysteine 73, cysteine 86, and cysteine 89 each coordinate Zn(2+). Mg(2+)-binding residues include aspartate 462, aspartate 464, and aspartate 466. Zn(2+) contacts are provided by cysteine 810, cysteine 884, cysteine 891, and cysteine 894.

Belongs to the RNA polymerase beta' chain family. As to quaternary structure, the RNAP catalytic core consists of 2 alpha, 1 beta, 1 beta' and 1 omega subunit. When a sigma factor is associated with the core the holoenzyme is formed, which can initiate transcription. Requires Mg(2+) as cofactor. Zn(2+) is required as a cofactor.

It catalyses the reaction RNA(n) + a ribonucleoside 5'-triphosphate = RNA(n+1) + diphosphate. DNA-dependent RNA polymerase catalyzes the transcription of DNA into RNA using the four ribonucleoside triphosphates as substrates. The chain is DNA-directed RNA polymerase subunit beta' from Rickettsia massiliae (strain Mtu5).